Consider the following 440-residue polypeptide: MEYTPPPKPQLSSRANAFSIAALMSSGSSKDKEAAESTIKPLEQFVEKSSCAQPLSDLSGLEPHGDFSGSPSALCTEPLIPTTPIIPSEEMAKISCSLETKELWDKFHELGTEMIITKSGRRMFPTIRVSFSGVDPEAKYIVLMDIVPVDNKRYRYAYHRSSWLVAGKADPPLPARLYVHPDSPFTGEQLMKQMVSFEKVKLTNNELDQHGHIILNSMHKYQPRVHIIKKKDHTASLLNLKSEEFRTFIFPETVFTAVTAYQNQLITKLKIDSNPFAKGFRDSSRLTDIERESVESLIQKHSYARSPIRTYGGEDDLGDDSQATQSRGSAFTTSDNLSLSSWVSSSTSFPGFQHPQSLSALGTSTASIATPIPHPIQGSLPPYSRLGMPLTPSAIASSMQGTGPTFPSFHMPRYHHYFQQGPYAAIQGLRHSSAVMTPFV.

The segment at residues leucine 103 to aspartate 282 is a DNA-binding region (T-box). Residues isoleucine 308 to threonine 333 are disordered. Over residues serine 321–threonine 333 the composition is skewed to polar residues.

It localises to the nucleus. Functionally, acts as a transcriptional regulator involved in heart developmental processes. The polypeptide is T-box transcription factor TBX20 (TBX20) (Gallus gallus (Chicken)).